The primary structure comprises 626 residues: 5'-AMP-activated protein kinase catalytic subunit alpha-2 (626 aa).

The span at 1–24 (MFSHQDRDRDRKEDGGGDGTEMKS) shows a compositional bias: basic and acidic residues. The segment at 1 to 77 (MFSHQDRDRD…GETSTKQQQE (77 aa)) is disordered. The span at 38–49 (NLSRKLSAKSRK) shows a compositional bias: basic residues. Residues 58-77 (DNSSKMSSPGGETSTKQQQE) show a composition bias toward polar residues. Residues 87–339 (YILKETLGVG…IKDVIAHEWF (253 aa)) enclose the Protein kinase domain. ATP contacts are provided by residues 93–101 (LGVGTFGKV) and K116. The active-site Proton acceptor is D210. At T243 the chain carries Phosphothreonine; by par-4. The segment at 541 to 568 (SGSASASSSRHASMSMPQKPAGIRGTRT) is disordered. The span at 542-555 (GSASASSSRHASMS) shows a compositional bias: low complexity.

It belongs to the protein kinase superfamily. CAMK Ser/Thr protein kinase family. SNF1 subfamily. As to quaternary structure, tetramer, composed of 2 regulatory (R) and 2 catalytic (C) subunits. In the presence of cAMP it dissociates into 2 active monomeric C subunits and an R dimer that binds four cAMP molecules. Post-translationally, phosphorylated on Thr-243 in response to oxidative stress and during dauer development. Phosphorylation at Thr-243 is increased in response to sodium azide or the AMP analog AICAR (5-amino-1-(5-phospho-beta-D-ribosyl)imidazole-4-carboxamide). As to expression, expressed in the pharynx, the ventral cord, neurons including the hermaphrodite-specific neuron, body wall muscles, the vulva, the excretory canal, and weakly in the intestine.

The catalysed reaction is L-seryl-[protein] + ATP = O-phospho-L-seryl-[protein] + ADP + H(+). The enzyme catalyses L-threonyl-[protein] + ATP = O-phospho-L-threonyl-[protein] + ADP + H(+). With respect to regulation, activated by phosphorylation. Acts as a sensor that couples lifespan to information about energy levels and insulin-like signals. Role in motility and response to oxidative stress. Involved in the establishment of germline stem cell (GSC) quiescence during dauer development. Plays a role in axon regrowth after axotomy in PLM neurons. Plays a role in the maintenance of glycogen stores which are necessary for resistance to hyperosmotic stress. Plays a role in the regulation of flp-7 secretion from ASI neurons. Keeps the CREB-regulated transcription coactivator 1 homolog crtc-1 inactive which in turn inhibits flp-7 secretion. Following serotonin signaling, derepresses crtc-1 which stimulates flp-7 secretion and subsequent body fat loss. In Caenorhabditis elegans, this protein is 5'-AMP-activated protein kinase catalytic subunit alpha-2.